A 135-amino-acid chain; its full sequence is NADPH-dependent 7-cyano-7-deazaguanine reductase (135 aa).

The active-site Thioimide intermediate is the cysteine 48. Catalysis depends on aspartate 55, which acts as the Proton donor. Substrate-binding positions include 70–72 (IEL) and 89–90 (HE).

The protein belongs to the GTP cyclohydrolase I family. QueF type 1 subfamily.

The protein resides in the cytoplasm. It carries out the reaction 7-aminomethyl-7-carbaguanine + 2 NADP(+) = 7-cyano-7-deazaguanine + 2 NADPH + 3 H(+). The protein operates within tRNA modification; tRNA-queuosine biosynthesis. In terms of biological role, catalyzes the NADPH-dependent reduction of 7-cyano-7-deazaguanine (preQ0) to 7-aminomethyl-7-deazaguanine (preQ1). This Prochlorococcus marinus (strain MIT 9313) protein is NADPH-dependent 7-cyano-7-deazaguanine reductase.